We begin with the raw amino-acid sequence, 90 residues long: Small ribosomal subunit protein uS15 (90 aa).

This sequence belongs to the universal ribosomal protein uS15 family. Part of the 30S ribosomal subunit. Forms a bridge to the 50S subunit in the 70S ribosome, contacting the 23S rRNA.

Functionally, one of the primary rRNA binding proteins, it binds directly to 16S rRNA where it helps nucleate assembly of the platform of the 30S subunit by binding and bridging several RNA helices of the 16S rRNA. Forms an intersubunit bridge (bridge B4) with the 23S rRNA of the 50S subunit in the ribosome. This is Small ribosomal subunit protein uS15 from Wolbachia sp. subsp. Brugia malayi (strain TRS).